Reading from the N-terminus, the 443-residue chain is 3-ketoacyl-CoA thiolase 1, peroxisomal (443 aa).

The N-terminal 30 residues, Met1–Cys30, are a transit peptide targeting the peroxisome. Catalysis depends on Cys130, which acts as the Acyl-thioester intermediate. Active-site proton acceptor residues include His385 and Cys417.

Belongs to the thiolase-like superfamily. Thiolase family. Homodimer. In terms of tissue distribution, low levels in seedlings and leaves.

Its subcellular location is the peroxisome. It carries out the reaction an acyl-CoA + acetyl-CoA = a 3-oxoacyl-CoA + CoA. It participates in lipid metabolism; fatty acid metabolism. Functionally, involved in fatty-acid beta-oxidation prior to gluconeogenesis during germination and subsequent seedling growth. Implicated in jasmonic acid (JA) biosynthesis. The chain is 3-ketoacyl-CoA thiolase 1, peroxisomal (KAT1) from Arabidopsis thaliana (Mouse-ear cress).